A 614-amino-acid polypeptide reads, in one-letter code: Dihydroxy-acid dehydratase (614 aa).

Aspartate 81 contacts Mg(2+). Cysteine 122 provides a ligand contact to [2Fe-2S] cluster. Residues aspartate 123 and lysine 124 each contribute to the Mg(2+) site. Lysine 124 carries the post-translational modification N6-carboxylysine. Cysteine 193 lines the [2Fe-2S] cluster pocket. Mg(2+) is bound at residue glutamate 489. Serine 515 serves as the catalytic Proton acceptor.

Belongs to the IlvD/Edd family. As to quaternary structure, homodimer. [2Fe-2S] cluster is required as a cofactor. Requires Mg(2+) as cofactor.

The catalysed reaction is (2R)-2,3-dihydroxy-3-methylbutanoate = 3-methyl-2-oxobutanoate + H2O. It carries out the reaction (2R,3R)-2,3-dihydroxy-3-methylpentanoate = (S)-3-methyl-2-oxopentanoate + H2O. It functions in the pathway amino-acid biosynthesis; L-isoleucine biosynthesis; L-isoleucine from 2-oxobutanoate: step 3/4. The protein operates within amino-acid biosynthesis; L-valine biosynthesis; L-valine from pyruvate: step 3/4. In terms of biological role, functions in the biosynthesis of branched-chain amino acids. Catalyzes the dehydration of (2R,3R)-2,3-dihydroxy-3-methylpentanoate (2,3-dihydroxy-3-methylvalerate) into 2-oxo-3-methylpentanoate (2-oxo-3-methylvalerate) and of (2R)-2,3-dihydroxy-3-methylbutanoate (2,3-dihydroxyisovalerate) into 2-oxo-3-methylbutanoate (2-oxoisovalerate), the penultimate precursor to L-isoleucine and L-valine, respectively. The polypeptide is Dihydroxy-acid dehydratase (Cellvibrio japonicus (strain Ueda107) (Pseudomonas fluorescens subsp. cellulosa)).